A 162-amino-acid polypeptide reads, in one-letter code: ATP synthase subunit b 1 (162 aa).

A helical membrane pass occupies residues 1 to 21 (MLLTAEFWVAVAFVAFLVIVW).

The protein belongs to the ATPase B chain family. As to quaternary structure, F-type ATPases have 2 components, F(1) - the catalytic core - and F(0) - the membrane proton channel. F(1) has five subunits: alpha(3), beta(3), gamma(1), delta(1), epsilon(1). F(0) has three main subunits: a(1), b(2) and c(10-14). The alpha and beta chains form an alternating ring which encloses part of the gamma chain. F(1) is attached to F(0) by a central stalk formed by the gamma and epsilon chains, while a peripheral stalk is formed by the delta and b chains.

It localises to the cell inner membrane. F(1)F(0) ATP synthase produces ATP from ADP in the presence of a proton or sodium gradient. F-type ATPases consist of two structural domains, F(1) containing the extramembraneous catalytic core and F(0) containing the membrane proton channel, linked together by a central stalk and a peripheral stalk. During catalysis, ATP synthesis in the catalytic domain of F(1) is coupled via a rotary mechanism of the central stalk subunits to proton translocation. Its function is as follows. Component of the F(0) channel, it forms part of the peripheral stalk, linking F(1) to F(0). This is ATP synthase subunit b 1 from Methylorubrum populi (strain ATCC BAA-705 / NCIMB 13946 / BJ001) (Methylobacterium populi).